We begin with the raw amino-acid sequence, 127 residues long: uncharacterized protein (127 aa).

The first 16 residues, 1–16 (MIKKIIFGIAILLSTS), serve as a signal peptide directing secretion. Cys17 is lipidated: N-palmitoyl cysteine. Cys17 carries S-diacylglycerol cysteine lipidation. A coiled-coil region spans residues 56–101 (EVREEIQKYRVAIVKINKKKRELYNRLSKEAQNFLAEQQKYKQKLS). A compositionally biased stretch (polar residues) spans 107 to 118 (VENDQKNNTADS). Residues 107–127 (VENDQKNNTADSNDNKSKDTK) form a disordered region.

It is found in the cell membrane. This is an uncharacterized protein from Rickettsia conorii (strain ATCC VR-613 / Malish 7).